Consider the following 359-residue polypeptide: 3-dehydroquinate synthase (359 aa).

Residues 71-76 (DGEAHK), 105-109 (GVIGD), 129-130 (TT), Lys-142, Lys-151, and 169-172 (TLHT) contribute to the NAD(+) site. Zn(2+)-binding residues include Glu-184, His-247, and His-264.

The protein belongs to the sugar phosphate cyclases superfamily. Dehydroquinate synthase family. Requires NAD(+) as cofactor. The cofactor is Co(2+). Zn(2+) is required as a cofactor.

The protein resides in the cytoplasm. It carries out the reaction 7-phospho-2-dehydro-3-deoxy-D-arabino-heptonate = 3-dehydroquinate + phosphate. Its pathway is metabolic intermediate biosynthesis; chorismate biosynthesis; chorismate from D-erythrose 4-phosphate and phosphoenolpyruvate: step 2/7. Catalyzes the conversion of 3-deoxy-D-arabino-heptulosonate 7-phosphate (DAHP) to dehydroquinate (DHQ). In Neisseria meningitidis serogroup B (strain ATCC BAA-335 / MC58), this protein is 3-dehydroquinate synthase.